A 728-amino-acid polypeptide reads, in one-letter code: Catalase-peroxidase (728 aa).

The tryptophyl-tyrosyl-methioninium (Trp-Tyr) (with M-244) cross-link spans 91-218 (WHSAGTYRTA…LAAVQMGLIY (128 aa)). The active-site Proton acceptor is the His-92. A cross-link (tryptophyl-tyrosyl-methioninium (Tyr-Met) (with W-91)) is located at residues 218 to 244 (YVNPEGPDGNPDPVAAARDIRDTFARM). Heme b is bound at residue His-259.

It belongs to the peroxidase family. Peroxidase/catalase subfamily. In terms of assembly, homodimer or homotetramer. Heme b is required as a cofactor. In terms of processing, formation of the three residue Trp-Tyr-Met cross-link is important for the catalase, but not the peroxidase activity of the enzyme.

It carries out the reaction H2O2 + AH2 = A + 2 H2O. The enzyme catalyses 2 H2O2 = O2 + 2 H2O. Bifunctional enzyme with both catalase and broad-spectrum peroxidase activity. The chain is Catalase-peroxidase from Burkholderia mallei (strain NCTC 10247).